Reading from the N-terminus, the 803-residue chain is Translation initiation factor IF-2 (803 aa).

Disordered regions lie at residues 95 to 125 (PVVEQKRETEPAPTQEVPLTSDTTNLNEKAE) and 138 to 178 (EVKE…EREE). Positions 111–121 (VPLTSDTTNLN) are enriched in polar residues. The span at 138–155 (EVKEEAKKTPSEKKETPK) shows a compositional bias: basic and acidic residues. A compositionally biased stretch (basic residues) spans 156 to 167 (KGPRKETRRSRK). A compositionally biased stretch (basic and acidic residues) spans 168–178 (PDKEDKWEREE). The tr-type G domain maps to 302–471 (PRAPVVTIMG…LLQAEVLELK (170 aa)). The tract at residues 311–318 (GHVDHGKT) is G1. 311–318 (GHVDHGKT) lines the GTP pocket. Positions 336–340 (GITQH) are G2. Residues 357-360 (DTPG) form a G3 region. GTP-binding positions include 357 to 361 (DTPGH) and 411 to 414 (NKID). The interval 411-414 (NKID) is G4. Residues 447–449 (SAK) form a G5 region.

It belongs to the TRAFAC class translation factor GTPase superfamily. Classic translation factor GTPase family. IF-2 subfamily.

It localises to the cytoplasm. One of the essential components for the initiation of protein synthesis. Protects formylmethionyl-tRNA from spontaneous hydrolysis and promotes its binding to the 30S ribosomal subunits. Also involved in the hydrolysis of GTP during the formation of the 70S ribosomal complex. In Coxiella burnetii (strain RSA 331 / Henzerling II), this protein is Translation initiation factor IF-2.